A 77-amino-acid chain; its full sequence is Acyl carrier protein (77 aa).

The region spanning 1 to 75 (MVFEKVKDII…DVVNYIKAHT (75 aa)) is the Carrier domain. An O-(pantetheine 4'-phosphoryl)serine modification is found at Ser35.

Belongs to the acyl carrier protein (ACP) family. In terms of processing, 4'-phosphopantetheine is transferred from CoA to a specific serine of apo-ACP by AcpS. This modification is essential for activity because fatty acids are bound in thioester linkage to the sulfhydryl of the prosthetic group.

The protein localises to the cytoplasm. Its pathway is lipid metabolism; fatty acid biosynthesis. Functionally, carrier of the growing fatty acid chain in fatty acid biosynthesis. This is Acyl carrier protein from Clostridium acetobutylicum (strain ATCC 824 / DSM 792 / JCM 1419 / IAM 19013 / LMG 5710 / NBRC 13948 / NRRL B-527 / VKM B-1787 / 2291 / W).